We begin with the raw amino-acid sequence, 142 residues long: Probable signal recognition particle 19 kDa protein (142 aa).

Residues 115–142 form a disordered region; that stretch reads KTRQPGYTAPSVASSSAAAAGKKNKKKK. Residues 123 to 135 show a composition bias toward low complexity; that stretch reads APSVASSSAAAAG.

The protein belongs to the SRP19 family. In terms of assembly, component of a signal recognition particle complex that consists of a 7SL RNA molecule of 300 nucleotides and six protein subunits: srpa-72, srpa-68, SRP54, F37F2.2/SRP19, F25G6.8/SRP14 and ZK512.4/SRP9.

Its subcellular location is the cytoplasm. The protein resides in the nucleus. The protein localises to the nucleolus. Component of the signal recognition particle (SRP) complex, a ribonucleoprotein complex that mediates the cotranslational targeting of secretory and membrane proteins to the endoplasmic reticulum (ER). Binds directly to 7SL RNA. Mediates binding of SRP54 to the SRP complex. The protein is Probable signal recognition particle 19 kDa protein of Caenorhabditis elegans.